Consider the following 67-residue polypeptide: Large ribosomal subunit protein bL35 (67 aa).

The segment covering 1–16 (MPKMKTKSSAKKRFRV) has biased composition (basic residues). A disordered region spans residues 1–23 (MPKMKTKSSAKKRFRVRPGGTVK).

It belongs to the bacterial ribosomal protein bL35 family.

The chain is Large ribosomal subunit protein bL35 from Variovorax paradoxus (strain S110).